Here is a 193-residue protein sequence, read N- to C-terminus: Proteasome subunit beta 1 (193 aa).

Residues 1–4 (MPGA) constitute a propeptide, removed in mature form; by autocatalysis. The active-site Nucleophile is Thr-5.

It belongs to the peptidase T1B family. As to quaternary structure, the 20S proteasome core is composed of 14 alpha and 14 beta subunits that assemble into four stacked heptameric rings, resulting in a barrel-shaped structure. The two inner rings, each composed of seven catalytic beta subunits, are sandwiched by two outer rings, each composed of seven alpha subunits. The catalytic chamber with the active sites is on the inside of the barrel. Has a gated structure, the ends of the cylinder being occluded by the N-termini of the alpha-subunits. Is capped at one or both ends by the proteasome regulatory ATPase, PAN.

It localises to the cytoplasm. It carries out the reaction Cleavage of peptide bonds with very broad specificity.. The formation of the proteasomal ATPase PAN-20S proteasome complex, via the docking of the C-termini of PAN into the intersubunit pockets in the alpha-rings, triggers opening of the gate for substrate entry. Interconversion between the open-gate and close-gate conformations leads to a dynamic regulation of the 20S proteasome proteolysis activity. Its function is as follows. Component of the proteasome core, a large protease complex with broad specificity involved in protein degradation. The protein is Proteasome subunit beta 1 of Cenarchaeum symbiosum (strain A).